A 364-amino-acid polypeptide reads, in one-letter code: Putative protein C31H2.4 (364 aa).

VOC domains lie at 6-134 (AIHH…LGEF) and 161-320 (LMDH…IFSK). Positions 164, 248, and 331 each coordinate Fe cation.

The protein belongs to the 4HPPD family. It depends on Fe cation as a cofactor.

The polypeptide is Putative protein C31H2.4 (Caenorhabditis elegans).